The sequence spans 74 residues: Small ribosomal subunit protein eS17 (74 aa).

It belongs to the eukaryotic ribosomal protein eS17 family.

This chain is Small ribosomal subunit protein eS17, found in Ignicoccus hospitalis (strain KIN4/I / DSM 18386 / JCM 14125).